The primary structure comprises 117 residues: MDKKTARMRRARKSRGRIRDVGAYRLSVHRTPRHIYAQVQQPDGATTLAAASTVEPALRQRSEGTGNVSAAQEVGRLIAERAKAAGIEQVAFDRGGYQYHGRVQALAEAAREAGLKF.

It belongs to the universal ribosomal protein uL18 family. In terms of assembly, part of the 50S ribosomal subunit; part of the 5S rRNA/L5/L18/L25 subcomplex. Contacts the 5S and 23S rRNAs.

This is one of the proteins that bind and probably mediate the attachment of the 5S RNA into the large ribosomal subunit, where it forms part of the central protuberance. The protein is Large ribosomal subunit protein uL18 of Halorhodospira halophila (strain DSM 244 / SL1) (Ectothiorhodospira halophila (strain DSM 244 / SL1)).